The following is a 413-amino-acid chain: CinA-like protein (413 aa).

The protein belongs to the CinA family.

This chain is CinA-like protein, found in Desulfosudis oleivorans (strain DSM 6200 / JCM 39069 / Hxd3) (Desulfococcus oleovorans).